Here is a 223-residue protein sequence, read N- to C-terminus: Ubiquitin carboxyl-terminal hydrolase isozyme L1 (223 aa).

Position 1 is an N-acetylmethionine (M1). Residues 2-221 (QLKPMEINPE…VRFSAVALCK (220 aa)) enclose the UCH catalytic domain. The segment at 5–10 (PMEINP) is interaction with ubiquitin. C90 (nucleophile) is an active-site residue. S125 is modified (phosphoserine). The active-site Proton donor is the H161. The segment at 211–216 (EVRFSA) is interaction with ubiquitin. C220 carries the S-farnesyl cysteine lipid modification. A propeptide spans 221 to 223 (KAA) (removed in mature form).

This sequence belongs to the peptidase C12 family. Monomer. Homodimer. Interacts with COPS5 and SNCA. O-glycosylated.

The protein localises to the cytoplasm. Its subcellular location is the endoplasmic reticulum membrane. The enzyme catalyses Thiol-dependent hydrolysis of ester, thioester, amide, peptide and isopeptide bonds formed by the C-terminal Gly of ubiquitin (a 76-residue protein attached to proteins as an intracellular targeting signal).. Functionally, ubiquitin-protein hydrolase involved both in the processing of ubiquitin precursors and of ubiquitinated proteins. This enzyme is a thiol protease that recognizes and hydrolyzes a peptide bond at the C-terminal glycine of ubiquitin. Also binds to free monoubiquitin and may prevent its degradation in lysosomes. The homodimer may have ATP-independent ubiquitin ligase activity. This chain is Ubiquitin carboxyl-terminal hydrolase isozyme L1 (UCHL1), found in Sus scrofa (Pig).